Consider the following 206-residue polypeptide: MFDKAIIEFDKALRTVFAPARSVRPVPGDDVPDAPLDDEQKRHAAALMRVNHVGEICAQALYQGQAIMSGDERVREELQRASHEETEHLAWTEQRIAELGGRKSLLNPLWYGGALAIGMLAGRFGDRWNLGFLAETERQVEAHLTSHLERLPADDRKSRAIVEQMRTDEVEHAETALKLGGRELPLPVRSAMKLASRVMTTAAYRV.

Positions 55, 85, 88, 137, 169, and 172 each coordinate Fe cation.

The protein belongs to the COQ7 family. Requires Fe cation as cofactor.

It localises to the cell membrane. It carries out the reaction a 5-methoxy-2-methyl-3-(all-trans-polyprenyl)benzene-1,4-diol + AH2 + O2 = a 3-demethylubiquinol + A + H2O. It functions in the pathway cofactor biosynthesis; ubiquinone biosynthesis. In terms of biological role, catalyzes the hydroxylation of 2-nonaprenyl-3-methyl-6-methoxy-1,4-benzoquinol during ubiquinone biosynthesis. This chain is 3-demethoxyubiquinol 3-hydroxylase, found in Azoarcus sp. (strain BH72).